The following is a 614-amino-acid chain: Vitamin B12 transporter BtuB (614 aa).

Positions methionine 1–alanine 20 are cleaved as a signal peptide. At glutamine 21–glycine 157 the chain is on the periplasmic side. The TonB box motif lies at aspartate 26–asparagine 33. The 115-residue stretch at proline 38 to threonine 152 folds into the TBDR plug domain. Cyanocob(III)alamin contacts are provided by residues leucine 83, serine 85, asparagine 92, and valine 110–serine 111. The 460-residue stretch at glutamate 155–phenylalanine 614 folds into the TBDR beta-barrel domain. Residues threonine 158–glycine 165 traverse the membrane as a beta stranded segment. The Extracellular segment spans residues serine 166–serine 168. The chain crosses the membrane as a beta stranded span at residues tyrosine 169–glutamine 178. Over glutamine 179–lysine 183 the chain is Periplasmic. Residues threonine 184–threonine 195 traverse the membrane as a beta stranded segment. Topologically, residues histidine 196–glycine 216 are extracellular. Residues aspartate 199, glutamine 211, aspartate 213, and aspartate 215 each coordinate Ca(2+). A beta stranded transmembrane segment spans residues phenylalanine 217 to glutamate 227. The Periplasmic segment spans residues histidine 228–threonine 231. The chain crosses the membrane as a beta stranded span at residues aspartate 232–asparagine 248. Residues tyrosine 249 and aspartate 250 each coordinate Ca(2+). Residues tyrosine 249–threonine 262 are Extracellular-facing. Cyanocob(III)alamin is bound at residue alanine 251. Aspartate 261 serves as a coordination point for Ca(2+). The chain crosses the membrane as a beta stranded span at residues arginine 263 to asparagine 277. Position 278 (glycine 278) is a topological domain, periplasmic. Residues glutamate 279 to asparagine 296 form a beta stranded membrane-spanning segment. The Extracellular portion of the chain corresponds to tyrosine 297 to alanine 308. Threonine 309 contributes to the cyanocob(III)alamin binding site. The chain crosses the membrane as a beta stranded span at residues threonine 309–isoleucine 325. Topologically, residues valine 326–glycine 327 are periplasmic. A beta stranded membrane pass occupies residues histidine 328 to tryptophan 337. Residues glutamine 338–glycine 352 lie on the Extracellular side of the membrane. A beta stranded transmembrane segment spans residues tyrosine 353–glycine 369. A topological domain (periplasmic) is located at residue aspartate 370. Residues phenylalanine 371–aspartate 381 traverse the membrane as a beta stranded segment. The Extracellular segment spans residues asparagine 382–glutamine 384. A beta stranded transmembrane segment spans residues phenylalanine 385 to isoleucine 400. Residues glutamate 401–glycine 402 lie on the Periplasmic side of the membrane. A beta stranded membrane pass occupies residues tyrosine 403–asparagine 417. Over leucine 418–glutamate 433 the chain is Extracellular. Residues lysine 434–glutamate 443 form a beta stranded membrane-spanning segment. The Periplasmic portion of the chain corresponds to glycine 444–glycine 448. The chain crosses the membrane as a beta stranded span at residues valine 449–asparagine 458. The Extracellular portion of the chain corresponds to aspartate 459–lysine 472. The chain crosses the membrane as a beta stranded span at residues tyrosine 473 to phenylalanine 490. The Periplasmic segment spans residues aspartate 491 to glycine 493. The beta stranded transmembrane segment at proline 494–alanine 509 threads the bilayer. Residues isoleucine 510 to leucine 516 lie on the Extracellular side of the membrane. Position 517 (arginine 517) interacts with cyanocob(III)alamin. The chain crosses the membrane as a beta stranded span at residues arginine 517–tryptophan 529. The Periplasmic segment spans residues glutamine 530–phenylalanine 534. A beta stranded membrane pass occupies residues aspartate 535 to aspartate 550. Tyrosine 551 is a binding site for cyanocob(III)alamin. Residues tyrosine 551–glutamine 557 lie on the Extracellular side of the membrane. The beta stranded transmembrane segment at threonine 558 to alanine 572 threads the bilayer. Residues tyrosine 573 to lysine 584 are Periplasmic-facing. Residues isoleucine 585–valine 596 traverse the membrane as a beta stranded segment. Topologically, residues tyrosine 597–threonine 601 are extracellular. The TonB C-terminal box signature appears at tyrosine 597 to phenylalanine 614. A beta stranded membrane pass occupies residues alanine 602 to phenylalanine 614.

The protein belongs to the TonB-dependent receptor family. BtuB (TC 1.B.14.3.1) subfamily. In terms of assembly, interacts with TonB. As to quaternary structure, (Microbial infection) The hairpin motif of the receptor-binding domain of colicin E3 (ColE3) interacts with BtuB without displacing BtuB's central plug. An N-terminal fragment of E3 binds OmpF; trimeric complexes with ColE3, BtuB and OmpF can be cross-linked and immunoprecipitated.

Its subcellular location is the cell outer membrane. With respect to regulation, calcium increases vitamin B12 binding affinity by a factor of 50-100. (Microbial infection) Colicins E1, E3 and K inhibit cyanocobalamin (CN-B12) uptake; E1 and E3 inhibit binding of CN-B12 to cells while colicin K inhibits a later, energy-dependent step of CN-B12. Involved in the active translocation of vitamin B12 (cyanocobalamin) across the outer membrane to the periplasmic space. It derives its energy for transport by interacting with the trans-periplasmic membrane protein TonB. In terms of biological role, (Microbial infection) Acts as a receptor for bacteriophages BF23 and C1, and for A and E colicins. Cyanocobalamin (CN-B12) in solid medium protects against colicins E1 and E3. Does not act as the translocon for colicin E3 (ColE3). The translocon is OmpF; trimeric complexes with ColE3, BtuB and OmpF can be cross-linked and immunoprecipitated. The sequence is that of Vitamin B12 transporter BtuB from Escherichia coli (strain K12).